The following is a 175-amino-acid chain: MTKEECFYLGKIVAKFSFKGEVLIKLDTDEPETYTEMESVLVEYNDNLVPFFIERSYLHKSTLLRAKFEDIETEEDAEDMIGAHVYLPLSMLPKLPEDKFYFHEIIGFNVIDAEHGNIGKIVSINDSTAQALFEIEKDGKQILIPMNDEFIEKVDKKNNTVRVITPEGLVELYLG.

Positions 97 to 169 (EDKFYFHEII…TVRVITPEGL (73 aa)) constitute a PRC barrel domain.

Belongs to the RimM family. In terms of assembly, binds ribosomal protein uS19.

The protein resides in the cytoplasm. Functionally, an accessory protein needed during the final step in the assembly of 30S ribosomal subunit, possibly for assembly of the head region. Essential for efficient processing of 16S rRNA. May be needed both before and after RbfA during the maturation of 16S rRNA. It has affinity for free ribosomal 30S subunits but not for 70S ribosomes. The sequence is that of Ribosome maturation factor RimM from Christiangramia forsetii (strain DSM 17595 / CGMCC 1.15422 / KT0803) (Gramella forsetii).